Consider the following 266-residue polypeptide: MDSAVDMADSERALNLTHIRFQLIRLEDTITFHLIERVQFPYNKTIYTPGAISIPDSKLSFFDWYFFQQEKLQSLIRRFESPDEYPYFPEAVQKPILKPLNYPKILHNNTVCVNDKIKKFYIEKFLPKVCPDFGREDRGEAQENYGSTSTCDIACLQALSRRIHFGKFVAESKFQSDPEYYTKLIQAEDREAIGESITNAAVEKQVLDRLRLKVETYGKDPSLLEGVEQPIKINVDAVVSMYKDFVIPLTKEVEVEYLMQRLIPEE.

The 257-residue stretch at 7 to 263 folds into the Chorismate mutase domain; it reads MADSERALNL…EVEYLMQRLI (257 aa). The L-tyrosine site is built by R77, R78, N144, G146, S147, and T150. N144, G146, and S147 together coordinate L-tryptophan.

As to quaternary structure, homodimer.

The protein resides in the cytoplasm. It catalyses the reaction chorismate = prephenate. The protein operates within metabolic intermediate biosynthesis; prephenate biosynthesis; prephenate from chorismate: step 1/1. Each dimer has two allosteric binding sites that can bind the regulatory effectors tryptophan or tyrosine. Can bind either one tryptophan or one tyrosine, two tryptophan or two tyrosine or one tryptophan and one tyrosine, which differentially affect the catalytic activity. Activated by tryptophan and subject to feedback inhibition by tyrosine. In the presence of both tryptophan and tyrosine, the enzyme is in the activated state. Its function is as follows. Catalyzes the Claisen rearrangement of chorismate to prephenate. Acts at the first branch point in the aromatic amino acid pathway where it steers biosynthesis towards phenylalanine and tyrosine, and away from tryptophan. The chain is Chorismate mutase from Trichoderma parareesei (Filamentous fungus).